The primary structure comprises 676 residues: Envelope glycoprotein (676 aa).

A signal peptide spans 1 to 32; sequence MGVTGILQLPRDRFKRTSFFLWVIILFQRTFS. The Extracellular segment spans residues 33-650; the sequence is IPLGVIHNST…NDNWWTGWRQ (618 aa). Asn40 carries an N-linked (GlcNAc...) asparagine; by host glycan. 5 disulfides stabilise this stretch: Cys53–Cys609, Cys108–Cys135, Cys121–Cys147, Cys511–Cys556, and Cys601–Cys608. Positions 54-201 are receptor-binding; the sequence is RDKLSSTNQL…DFFSSHPLRE (148 aa). N-linked (GlcNAc...) asparagine; by host glycosylation is found at Asn204, Asn228, Asn238, Asn257, Asn268, Asn296, Asn317, Asn333, Asn346, Asn386, and Asn413. Residues 305-485 are mucin-like region; the sequence is ELSFTAVSNR…SGKLGLITNT (181 aa). The segment covering 314–335 has biased composition (polar residues); sequence RAKNISGQSPARTSSDPGTNTT. Positions 314–337 are disordered; that stretch reads RAKNISGQSPARTSSDPGTNTTTE. 2 disordered regions span residues 373–392 and 402–479; these read TSLR…HNTP and TQVE…SGKL. The segment covering 414-427 has biased composition (low complexity); it reads ASTTSDTPPATTAA. N-linked (GlcNAc...) asparagine; by host glycosylation is found at Asn436, Asn454, and Asn462. The segment covering 447-464 has biased composition (polar residues); it reads ATTTSPQNHSETAGNNNT. The segment at 524–539 is fusion peptide; sequence GAAIGLAWIPYFGPAA. Residues 554-595 are a coiled coil; that stretch reads LICGLRQLANETTQALQLFLRATTELRTFSILNRKAIDFLLQ. An N-linked (GlcNAc...) asparagine; by host glycan is attached at Asn563. A coiled-coil region spans residues 615 to 634; it reads WTKNITDKIDQIIHDFVDKT. N-linked (GlcNAc...) asparagine; by host glycosylation occurs at Asn618. A helical transmembrane segment spans residues 651–671; it reads WIPAGIGVTGVIIAVIALFCI. 2 S-palmitoyl cysteine; by host lipidation sites follow: Cys670 and Cys672. Topologically, residues 672 to 676 are cytoplasmic; the sequence is CKFVF.

This sequence belongs to the filoviruses glycoprotein family. Homotrimer; each monomer consists of a GP1 and a GP2 subunit linked by disulfide bonds. The resulting peplomers (GP1,2) protrude from the virus surface as spikes. Interacts with host integrin alpha-V/ITGAV. Interacts with host CLEC10A. Binds also to host CD209 and CLEC4M/DC-SIGN(R). Interacts with host FOLR1. Interacts with BST2; this interaction inhibits the antiviral effect of BST2 and this allows viral release from infected cells. Interacts with host FCN1; this interaction enhances viral entry. Interacts with host TLR4; this interaction induces cell death in T-lymphocytes or proinflammatory cytokines and SOCS1 production in monocytes. In terms of assembly, interacts with host entry receptor NPC1. As to quaternary structure, GP1 and GP2delta are part of GP1,2delta soluble complexes released by ectodomain shedding. The signal peptide region modulates GP's high mannose glycosylation, thereby determining the efficiency of the interactions with DC-SIGN(R). Post-translationally, N-glycosylated. In terms of processing, O-glycosylated in the mucin-like region. Palmitoylation of GP2 is not required for its function. Post-translationally, specific enzymatic cleavages in vivo yield mature proteins. The precursor is processed into GP1 and GP2 by host cell furin in the trans Golgi, and maybe by other host proteases, to yield the mature GP1 and GP2 proteins. The cleavage site corresponds to the furin optimal cleavage sequence [KR]-X-[KR]-R. This cleavage does not seem to be required for function. After the internalization of the virus into cell endosomes, GP1 C-terminus is removed by the endosomal proteases cathepsin B, cathepsin L, or both, leaving a 19-kDa N-terminal fragment which is further digested by cathepsin B. Proteolytic processing of GP1,2 by host ADAM17 can remove the transmembrane anchor of GP2 and leads to shedding of complexes consisting in GP1 and truncated GP2 (GP1,2delta).

It is found in the virion membrane. The protein localises to the host cell membrane. Its subcellular location is the secreted. Functionally, trimeric GP1,2 complexes form the virion surface spikes and mediate the viral entry processes, with GP1 acting as the receptor-binding subunit and GP2 as the membrane fusion subunit. At later times of infection, down-regulates the expression of various host cell surface molecules that are essential for immune surveillance and cell adhesion. Down-modulates several integrins including ITGA1, ITGA2, ITGA3, ITGA4, ITGA5, ITGA6, ITGAV and ITGB1. This decrease in cell adhesion molecules may lead to cell detachment, contributing to the disruption of blood vessel integrity and hemorrhages developed during infection (cytotoxicity). Interacts with host TLR4 and thereby stimulates the differentiation and activation of monocytes leading to bystander death of T-lymphocytes. Down-regulates as well the function of host natural killer cells. Counteracts the antiviral effect of host BST2/tetherin that restricts release of progeny virions from infected cells. However, cooperates with VP40 and host BST2 to activate canonical NF-kappa-B pathway in a manner dependent on neddylation. Its function is as follows. Functions as a decoy for anti-GP1,2 antibodies thereby contributing to viral immune evasion. Interacts and activates host macrophages and dendritic cells inducing up-regulation of cytokine transcription. This effect is mediated throught activation of host TLR4. Responsible for binding to the receptor(s) on target cells. Interacts with CD209/DC-SIGN and CLEC4M/DC-SIGNR which act as cofactors for virus entry into dendritic cells (DCs) and endothelial cells. Binding to the macrophage specific lectin CLEC10A also seems to enhance virus infectivity. Interaction with FOLR1/folate receptor alpha may be a cofactor for virus entry in some cell types, although results are contradictory. Members of the Tyro3 receptor tyrosine kinase family also seem to be cell entry factors in filovirus infection. Once attached, the virions are internalized through clathrin-dependent endocytosis and/or macropinocytosis. After internalization of the virus into the endosomes of the host cell, proteolysis of GP1 by two cysteine proteases, CTSB/cathepsin B and CTSL/cathepsin L removes the glycan cap and allows GP1 binding to the host entry receptor NPC1. NPC1-binding, Ca(2+) and acidic pH induce a conformational change of GP2, which unmasks its fusion peptide and permit membranes fusion. In terms of biological role, acts as a class I viral fusion protein. Under the current model, the protein has at least 3 conformational states: pre-fusion native state, pre-hairpin intermediate state, and post-fusion hairpin state. During viral and target cell membrane fusion, the coiled coil regions (heptad repeats) assume a trimer-of-hairpins structure, positioning the fusion peptide in close proximity to the C-terminal region of the ectodomain. The formation of this structure appears to drive apposition and subsequent fusion of viral and target cell membranes. Responsible for penetration of the virus into the cell cytoplasm by mediating the fusion of the membrane of the endocytosed virus particle with the endosomal membrane. Low pH in endosomes induces an irreversible conformational change in GP2, releasing the fusion hydrophobic peptide. This chain is Envelope glycoprotein (GP), found in Epomops franqueti (Franquet's epauletted fruit bat).